Reading from the N-terminus, the 141-residue chain is Putative nickel-responsive regulator (141 aa).

4 residues coordinate Ni(2+): His80, His91, His93, and Cys99.

The protein belongs to the transcriptional regulatory CopG/NikR family. Ni(2+) is required as a cofactor.

In terms of biological role, transcriptional regulator. This Methanococcus vannielii (strain ATCC 35089 / DSM 1224 / JCM 13029 / OCM 148 / SB) protein is Putative nickel-responsive regulator.